The chain runs to 218 residues: Thiopurine S-methyltransferase (218 aa).

The S-adenosyl-L-methionine site is built by Trp10, Leu45, Glu66, and Arg123.

It belongs to the class I-like SAM-binding methyltransferase superfamily. TPMT family.

It localises to the cytoplasm. It carries out the reaction S-adenosyl-L-methionine + a thiopurine = S-adenosyl-L-homocysteine + a thiopurine S-methylether.. The sequence is that of Thiopurine S-methyltransferase from Shewanella sp. (strain W3-18-1).